Reading from the N-terminus, the 263-residue chain is Endonuclease 8 (263 aa).

Proline 2 (schiff-base intermediate with DNA) is an active-site residue. Residue glutamate 3 is the Proton donor of the active site. Residue lysine 53 is the Proton donor; for beta-elimination activity of the active site. DNA contacts are provided by glutamine 70, arginine 125, and asparagine 169. An FPG-type zinc finger spans residues 229–263; it reads KVFHRDGEPCERCGGIIEKTTLSSRPFYWCPGCQH. Arginine 253 serves as the catalytic Proton donor; for delta-elimination activity.

This sequence belongs to the FPG family. The cofactor is Zn(2+).

It carries out the reaction 2'-deoxyribonucleotide-(2'-deoxyribose 5'-phosphate)-2'-deoxyribonucleotide-DNA = a 3'-end 2'-deoxyribonucleotide-(2,3-dehydro-2,3-deoxyribose 5'-phosphate)-DNA + a 5'-end 5'-phospho-2'-deoxyribonucleoside-DNA + H(+). Involved in base excision repair of DNA damaged by oxidation or by mutagenic agents. Acts as a DNA glycosylase that recognizes and removes damaged bases. Has a preference for oxidized pyrimidines, such as thymine glycol, 5,6-dihydrouracil and 5,6-dihydrothymine. Has AP (apurinic/apyrimidinic) lyase activity and introduces nicks in the DNA strand. Cleaves the DNA backbone by beta-delta elimination to generate a single-strand break at the site of the removed base with both 3'- and 5'-phosphates. The chain is Endonuclease 8 from Escherichia coli O6:K15:H31 (strain 536 / UPEC).